Consider the following 470-residue polypeptide: Iron-sulfur cluster assembly SufBD family protein ABCI9 (470 aa).

It belongs to the iron-sulfur cluster assembly SufBD family.

In Arabidopsis thaliana (Mouse-ear cress), this protein is Iron-sulfur cluster assembly SufBD family protein ABCI9 (ABCI9).